The chain runs to 454 residues: Probable ECA polymerase (454 aa).

11 helical membrane passes run 3 to 23 (LGQFGGLFCIYLIAVIFILTL), 39 to 59 (FSMLYLLTFYFGFPLTCMLVF), 61 to 81 (FGVAVVPVEYLLYAMLSATAF), 119 to 139 (LALVAVGTVGIFFMQNGFLLF), 154 to 174 (GVALKRFFYFFIPAMLVVYFL), 180 to 200 (AWFFFLASTVAFGILTYVIVG), 201 to 221 (GTRANIIIAFSLFLFIGIVRG), 222 to 242 (WITLWMLAAAGVFGIVGMFWL), 340 to 360 (LVVMGGVLFIPLGAIVVGLII), 377 to 397 (YKAAILQSFCFGAVFNIIVLA), and 409 to 429 (VFFCVIFGACLVLAKLLYWLF).

Belongs to the WzyE family. As to quaternary structure, probably part of a complex composed of WzxE, WzyE and WzzE.

Its subcellular location is the cell inner membrane. Its pathway is bacterial outer membrane biogenesis; enterobacterial common antigen biosynthesis. Functionally, probably involved in the polymerization of enterobacterial common antigen (ECA) trisaccharide repeat units. This chain is Probable ECA polymerase, found in Yersinia pestis bv. Antiqua (strain Angola).